The primary structure comprises 754 residues: Polyadenylate-binding protein, cytoplasmic and nuclear (754 aa).

Over residues 1 to 25 (MSAEVSTTPAADNVNGTPEATNAAA) the composition is skewed to polar residues. The interval 1-52 (MSAEVSTTPAADNVNGTPEATNAAATSAPEVTAVESSSPTSPNNNNQPHSAS) is disordered. The span at 36–46 (SSSPTSPNNNN) shows a compositional bias: low complexity. RRM domains lie at 51-129 (ASLY…WSQR), 139-216 (GNVF…HHIS), 232-309 (TNIY…RAQK), and 335-465 (VNLY…LAQR). Disordered stretches follow at residues 365–420 (KVMR…KKSD) and 595–648 (RGGG…EEAP). A compositionally biased stretch (basic and acidic residues) spans 366-420 (VMRDSTPAERTETPDSEKEKEVNKENEKKEDEEKAAEEKPKESDEEKKDETKKSD). A compositionally biased stretch (gly residues) spans 610-633 (GMRGPGYQGRGGPQGGPRPQGGRG). Residues 634 to 648 (QNAAAQPAAGREEAP) show a composition bias toward low complexity. The region spanning 649 to 726 (AGALTAQALN…ALSVYDEYMK (78 aa)) is the PABC domain. Positions 729-754 (GEGEAPADADKPKEAAKETATEENKS) are disordered.

Belongs to the polyadenylate-binding protein type-1 family.

The protein localises to the cytoplasm. It localises to the nucleus. Binds the poly(A) tail of mRNA. Appears to be an important mediator of the multiple roles of the poly(A) tail in mRNA biogenesis, stability and translation. In the nucleus, involved in both mRNA cleavage and polyadenylation. Is also required for efficient mRNA export to the cytoplasm. Acts in concert with a poly(A)-specific nuclease (PAN) to affect poly(A) tail shortening, which may occur concomitantly with either nucleocytoplasmic mRNA transport or translational initiation. In the cytoplasm, stimulates translation initiation and regulates mRNA decay through translation termination-coupled poly(A) shortening, probably mediated by PAN. This chain is Polyadenylate-binding protein, cytoplasmic and nuclear (pab1), found in Aspergillus clavatus (strain ATCC 1007 / CBS 513.65 / DSM 816 / NCTC 3887 / NRRL 1 / QM 1276 / 107).